The chain runs to 990 residues: Nucleotide-binding leucine-rich repeat (NLR)-like protein (990 aa).

Positions 22–304 (GWICAIPTEL…AVAAAYAKIL (283 aa)) are purine nucleoside phosphorylase domain. The 230-residue stretch at 334–563 (REEHLRQVLT…TISNYLEVYE (230 aa)) folds into the NB-ARC domain. TPR repeat units follow at residues 732–765 (RDLL…KKLA), 774–807 (IGSM…MKQV), 816–849 (LGSM…RKQA), 858–891 (LMSM…KQQT), 900–933 (LASM…RKQV), and 942–975 (LQSM…ATLD). The segment at 965–990 (QQQQQSQATLDEGRLSKPARKRRKKK) is disordered. Residues 981–990 (KPARKRRKKK) show a composition bias toward basic residues.

It carries out the reaction ATP + H2O = D-ribose 5-triphosphate + adenine. The catalysed reaction is dATP + H2O = 2-deoxyribose 5-triphosphate + adenine. In terms of biological role, the N-terminal purine nucleoside phosphorylase (PNP) domain cleaves the N-glycosidic bond of ATP, and to a lesser extent dATP; has very weak activity on adenosine and deoxyadenosine and no activity on (d)ADP or (d)AMP. This chain is Nucleotide-binding leucine-rich repeat (NLR)-like protein, found in Hyaloscypha variabilis (strain UAMH 11265 / GT02V1 / F) (Meliniomyces variabilis).